The sequence spans 376 residues: 23S rRNA (uracil(747)-C(5))-methyltransferase RlmC (376 aa).

4 residues coordinate [4Fe-4S] cluster: cysteine 3, cysteine 11, cysteine 14, and cysteine 87. S-adenosyl-L-methionine-binding residues include glutamine 212, phenylalanine 241, glutamate 262, and asparagine 307. Cysteine 334 acts as the Nucleophile in catalysis.

The protein belongs to the class I-like SAM-binding methyltransferase superfamily. RNA M5U methyltransferase family. RlmC subfamily.

The enzyme catalyses uridine(747) in 23S rRNA + S-adenosyl-L-methionine = 5-methyluridine(747) in 23S rRNA + S-adenosyl-L-homocysteine + H(+). In terms of biological role, catalyzes the formation of 5-methyl-uridine at position 747 (m5U747) in 23S rRNA. In Pectobacterium carotovorum subsp. carotovorum (strain PC1), this protein is 23S rRNA (uracil(747)-C(5))-methyltransferase RlmC.